The primary structure comprises 77 residues: Putative sulfur carrier protein YedF (77 aa).

The Cysteine persulfide intermediate role is filled by C17.

This sequence belongs to the sulfur carrier protein TusA family.

The chain is Putative sulfur carrier protein YedF (yedF) from Escherichia coli O157:H7.